The chain runs to 485 residues: Protein LAZ1 (485 aa).

The Cytoplasmic portion of the chain corresponds to 1–19 (MDILKSYHLLAAAYSAPAW). A helical membrane pass occupies residues 20-40 (ASFMAGAFLVLTLSLSLFLVF). Residues 41–53 (DHLSTYKNPEEQK) lie on the Lumenal side of the membrane. A helical membrane pass occupies residues 54 to 74 (FLIGVILMVPCYSIESFASLV). The Cytoplasmic segment spans residues 75 to 167 (KPSISVDCGI…QVVKFGIVQY (93 aa)). The helical transmembrane segment at 168 to 188 (MIIKSLTALTALILEAFGVYC) threads the bilayer. Over 189–196 (EGEFKWGC) the chain is Lumenal. Residues 197–217 (GYPYLAVVLNFSQSWALYCLV) form a helical membrane-spanning segment. Topologically, residues 218 to 241 (QFYGATKDELAHIQPLAKFLTFKS) are cytoplasmic. Residues 242–262 (IVFLTWWQGVAIALLSSLGLF) form a helical membrane-spanning segment. Residues 263–277 (KSSIAQSLQLKTSVQ) lie on the Lumenal side of the membrane. A helical membrane pass occupies residues 278–298 (DFIICIEMGIASVVHLYVFPA). Over 299-485 (KPYGLMGDRF…VRGRRWITKD (187 aa)) the chain is Cytoplasmic. Residues 384 to 415 (MEKSITKFNEKLHKISQNIKKHDKEKRRVKDD) are a coiled coil. The tract at residues 400–485 (QNIKKHDKEK…VRGRRWITKD (86 aa)) is disordered. Basic and acidic residues predominate over residues 403 to 416 (KKHDKEKRRVKDDS). Over residues 455–469 (GYTSAESGGESSSDQ) the composition is skewed to polar residues. Positions 476 to 485 (VRGRRWITKD) are enriched in basic and acidic residues.

It belongs to the TMEM184 family.

It is found in the endomembrane system. It localises to the cell membrane. The protein localises to the cytoplasm. The protein resides in the cytosol. Its function is as follows. Required for programmed cell death (PCD) associated with hypersensitive response (HR). Involved both in the induction of EDS1/PAD4 mediated HR and in accelerated cell death in the acd11 mutant. Not required for HR induction elicited through pathways exclusively dependent on CC-NB-LRR resistance proteins. This is Protein LAZ1 from Arabidopsis thaliana (Mouse-ear cress).